Reading from the N-terminus, the 276-residue chain is GPN-loop GTPase 3 (276 aa).

13-18 (SSGKST) lines the GTP pocket. Positions 70-72 (GPN) match the Gly-Pro-Asn (GPN)-loop; involved in dimer interface motif. 173-176 (SKMD) contacts GTP. Residues 257–276 (EDQEPKDPDRFEADDLEDDE) form a disordered region. Residues 259–269 (QEPKDPDRFEA) show a composition bias toward basic and acidic residues.

Belongs to the GPN-loop GTPase family. Heterodimers with gpn1 or gpn2. Binds to RNA polymerase II (RNAPII).

It localises to the cytoplasm. The protein localises to the nucleus. In terms of biological role, small GTPase required for proper nuclear import of RNA polymerase II and III (RNAPII and RNAPIII). May act at an RNAP assembly step prior to nuclear import. This Schizosaccharomyces pombe (strain 972 / ATCC 24843) (Fission yeast) protein is GPN-loop GTPase 3.